A 125-amino-acid polypeptide reads, in one-letter code: Acidic phospholipase A2 HTe (125 aa).

7 cysteine pairs are disulfide-bonded: Cys11–Cys77, Cys27–Cys124, Cys29–Cys45, Cys44–Cys105, Cys51–Cys98, Cys61–Cys91, and Cys84–Cys96. Ca(2+) is bound by residues Tyr28, Gly30, and Gly32. The active site involves His48. Position 49 (Asp49) interacts with Ca(2+). Residue Asp99 is part of the active site.

This sequence belongs to the phospholipase A2 family. Group I subfamily. D49 sub-subfamily. Ca(2+) is required as a cofactor. Post-translationally, no glycosylation was detected on this protein. In terms of tissue distribution, expressed by the venom gland.

It is found in the secreted. It carries out the reaction a 1,2-diacyl-sn-glycero-3-phosphocholine + H2O = a 1-acyl-sn-glycero-3-phosphocholine + a fatty acid + H(+). Functionally, snake venom phospholipase A2 (PLA2) that blocks neuromuscular transmission, but that does not produce blockade by virtue of a selective action on nerve endings. Instead, the toxin acts both on nerve and on muscle. PLA2 catalyzes the calcium-dependent hydrolysis of the 2-acyl groups in 3-sn-phosphoglycerides. The polypeptide is Acidic phospholipase A2 HTe (Notechis scutatus scutatus (Mainland tiger snake)).